The sequence spans 364 residues: MAAASTSSPVISQPQFTAMNEQQCFYNESIAFFYNRSGKYLATEWNTVSKLVMGLGITVCVFIMLANLLVMVAIYVNRRFHFPIYYLMANLAAADFFAGLAYFYLMFNTGPNTRRLTVSTWLLRQGLIDTSLTASVANLLAIAIERHITVFRMQLHTRMSNRRVVVVIVVIWTMAIVMGAIPSVGWNCICDIDHCSNMAPLYSDSYLVFWAIFNLVTFVVMVVLYAHIFGYVRQRTMRMSRHSSGPRRNRDTMMSLLKTVVIVLGAFIVCWTPGLVLLLLDVCCPQCDVLAYEKFFLLLAEFNSAMNPIIYSYRDKEMSATFRQILCCQRNENPNGPTEGSDRSASSLNHTILAGVHSNDHSVV.

Over 1-50 the chain is Extracellular; it reads MAAASTSSPVISQPQFTAMNEQQCFYNESIAFFYNRSGKYLATEWNTVSK. Intrachain disulfides connect Cys24/Cys190 and Cys188/Cys195. N-linked (GlcNAc...) asparagine glycosylation is found at Asn27 and Asn35. A 1-acyl-sn-glycero-3-phosphate is bound at residue Lys39. A helical membrane pass occupies residues 51–75; it reads LVMGLGITVCVFIMLANLLVMVAIY. Residues 76–83 lie on the Cytoplasmic side of the membrane; that stretch reads VNRRFHFP. The helical transmembrane segment at 84 to 107 threads the bilayer; sequence IYYLMANLAAADFFAGLAYFYLMF. At 108 to 121 the chain is on the extracellular side; sequence NTGPNTRRLTVSTW. Residues 122 to 144 traverse the membrane as a helical segment; that stretch reads LLRQGLIDTSLTASVANLLAIAI. A 1-acyl-sn-glycero-3-phosphate is bound at residue 124–129; the sequence is RQGLID. Over 145-163 the chain is Cytoplasmic; sequence ERHITVFRMQLHTRMSNRR. A helical transmembrane segment spans residues 164–184; it reads VVVVIVVIWTMAIVMGAIPSV. The Extracellular portion of the chain corresponds to 185 to 204; it reads GWNCICDIDHCSNMAPLYSD. A helical transmembrane segment spans residues 205 to 225; the sequence is SYLVFWAIFNLVTFVVMVVLY. An a 1-acyl-sn-glycero-3-phosphate-binding site is contributed by Trp210. Topologically, residues 226-255 are cytoplasmic; sequence AHIFGYVRQRTMRMSRHSSGPRRNRDTMMS. A helical membrane pass occupies residues 256-280; sequence LLKTVVIVLGAFIVCWTPGLVLLLL. Over 281-294 the chain is Extracellular; that stretch reads DVCCPQCDVLAYEK. A disulfide bridge links Cys284 with Cys287. The chain crosses the membrane as a helical span at residues 295–315; sequence FFLLLAEFNSAMNPIIYSYRD. Topologically, residues 316 to 364 are cytoplasmic; it reads KEMSATFRQILCCQRNENPNGPTEGSDRSASSLNHTILAGVHSNDHSVV. Position 341 is a phosphoserine (Ser341). A Phosphothreonine modification is found at Thr351.

This sequence belongs to the G-protein coupled receptor 1 family. In terms of assembly, interacts with RALA and GRK2. Interacts with GNAQ and GNA13. Interacts with CD14; the interaction is enhanced by exposure to bacterial lipopolysaccharide (LPS). N-glycosylated. Detected in lung. Detected in oligodendrocytes in corpus callosum in brain cortex (at protein level). Expressed within the embryonic cerebral cortex, where it is enriched in the ventricular zone. In the adult brain, also expressed in oligodendrocytes, as well as Schwann cells of the peripheral nervous system. Expressed in many other tissues, including lung, heart, intestine, spleen, thymus, and stomach. No expression in liver. Detected in kidney and testis. Detected in embryonic fibroblasts. Detected in adult lung fibroblasts and lung endothelial cells. Detected in dorsal root ganglion and dorsal root. Detected in astrocytes. Detected in bone.

It is found in the cell surface. It localises to the cell membrane. The protein resides in the endosome. In terms of biological role, receptor for lysophosphatidic acid (LPA). Plays a role in the reorganization of the actin cytoskeleton, cell migration, differentiation and proliferation, and thereby contributes to the responses to tissue damage and infectious agents. Activates downstream signaling cascades via the G(i)/G(o), G(12)/G(13), and G(q) families of heteromeric G proteins. Signaling inhibits adenylyl cyclase activity and decreases cellular cAMP levels. Signaling triggers an increase of cytoplasmic Ca(2+) levels. Activates RALA; this leads to the activation of phospholipase C (PLC) and the formation of inositol 1,4,5-trisphosphate. Signaling mediates activation of down-stream MAP kinases. Contributes to the regulation of cell shape. Promotes Rho-dependent reorganization of the actin cytoskeleton in neuronal cells and neurite retraction. Promotes the activation of Rho and the formation of actin stress fibers. Promotes formation of lamellipodia at the leading edge of migrating cells via activation of RAC1. Through its function as LPA receptor, plays a role in chemotaxis and cell migration, including responses to injury and wounding. Plays a role in triggering inflammation in response to bacterial lipopolysaccharide (LPS) via its interaction with CD14. Promotes cell proliferation in response to LPA. Inhibits the intracellular ciliogenesis pathway in response to LPA and through AKT1 activation. Required for normal skeleton development. May play a role in osteoblast differentiation. Required for normal brain development. Required for normal proliferation, survival and maturation of newly formed neurons in the adult dentate gyrus. Plays a role in pain perception and in the initiation of neuropathic pain. The protein is Lysophosphatidic acid receptor 1 (Lpar1) of Mus musculus (Mouse).